The sequence spans 313 residues: Intelectin-1a (313 aa).

Positions Met1–Ser18 are cleaved as a signal peptide. Positions Ser32–Cys251 constitute a Fibrinogen C-terminal domain. Cys41 and Cys70 are joined by a disulfide. Residues His86, Glu87, Asn89, Gly92, Gly97, Asp98, and Asp133 each contribute to the Ca(2+) site. 3 disulfides stabilise this stretch: Cys94-Cys280, Cys199-Cys259, and Cys251-Cys265. Ca(2+) is bound by residues Asn260, Glu262, Glu274, and Asp282. A carbohydrate contacts are provided by residues Glu262–His263 and Glu274. Ser298 carries GPI-anchor amidated serine lipidation. The propeptide occupies Ser299–Arg313.

As to quaternary structure, monomer. May interact with LTF. Expressed in small intestinal Paneth cells in uninfected mice. Expression also detected in various other tissues including stomach, kidney, ovary and brain.

It localises to the cell membrane. Its subcellular location is the secreted. In terms of biological role, lectin that specifically recognizes microbial carbohydrate chains in a calcium-dependent manner. Binds to microbial glycans that contain a terminal acyclic 1,2-diol moiety, including beta-linked D-galactofuranose (beta-Galf), D-phosphoglycerol-modified glycans, D-glycero-D-talo-oct-2-ulosonic acid (KO) and 3-deoxy-D-manno-oct-2-ulosonic acid (KDO). Binds to glycans from Gram-positive and Gram-negative bacteria, including K.pneumoniae, S.pneumoniae, Y.pestis, P.mirabilis and P.vulgaris. Does not bind mammalian glycans. Probably plays a role in the defense system against microorganisms. May function as adipokine that has no effect on basal glucose uptake but enhances insulin-stimulated glucose uptake in adipocytes. Increases AKT phosphorylation in the absence and presence of insulin. May interact with lactoferrin/LTF and increase its uptake, and may thereby play a role in iron absorption. This chain is Intelectin-1a (Itln1), found in Mus musculus (Mouse).